The chain runs to 173 residues: NADH-ubiquinone oxidoreductase chain 6 (173 aa).

Helical transmembrane passes span 1–21, 25–45, 53–73, 82–102, and 142–162; these read MTYVMSLFLLGLVLGLVAVAS, PYFGALSLVGVAAFGCGVLIW, LVLFLIYLGGMLVVFAYSAAL, LGSWPVVSVYFGYFFFVFGIL, and GVLLLGAWVLLLTLLVVLELV.

Belongs to the complex I subunit 6 family.

The protein resides in the mitochondrion membrane. It carries out the reaction a ubiquinone + NADH + 5 H(+)(in) = a ubiquinol + NAD(+) + 4 H(+)(out). In terms of biological role, core subunit of the mitochondrial membrane respiratory chain NADH dehydrogenase (Complex I) that is believed to belong to the minimal assembly required for catalysis. Complex I functions in the transfer of electrons from NADH to the respiratory chain. The immediate electron acceptor for the enzyme is believed to be ubiquinone. The chain is NADH-ubiquinone oxidoreductase chain 6 (MT-ND6) from Tetraodon nigroviridis (Spotted green pufferfish).